Reading from the N-terminus, the 596-residue chain is Probable protein phosphatase 2C 26 (596 aa).

The segment at 122–154 is disordered; sequence SGPLDPAVPFSGPLPAKPPKPASSSSRGFSRRF. The PPM-type phosphatase domain maps to 177 to 584; sequence LRRDDGVQWA…DDVTVMVISL (408 aa). Mn(2+)-binding residues include Asp212, Gly213, Asp512, and Asp575.

It belongs to the PP2C family. The cofactor is Mg(2+). Mn(2+) is required as a cofactor.

It catalyses the reaction O-phospho-L-seryl-[protein] + H2O = L-seryl-[protein] + phosphate. The enzyme catalyses O-phospho-L-threonyl-[protein] + H2O = L-threonyl-[protein] + phosphate. The protein is Probable protein phosphatase 2C 26 of Oryza sativa subsp. japonica (Rice).